The sequence spans 298 residues: Diphthine methyl ester synthase (298 aa).

Residues L9, D85, G88, 113-114 (SV), L164, L222, and H247 each bind S-adenosyl-L-methionine.

Belongs to the diphthine synthase family.

The protein resides in the cytoplasm. It carries out the reaction 2-[(3S)-amino-3-carboxypropyl]-L-histidyl-[translation elongation factor 2] + 4 S-adenosyl-L-methionine = diphthine methyl ester-[translation elongation factor 2] + 4 S-adenosyl-L-homocysteine + 3 H(+). It functions in the pathway protein modification; peptidyl-diphthamide biosynthesis. S-adenosyl-L-methionine-dependent methyltransferase that catalyzes four methylations of the modified target histidine residue in translation elongation factor 2 (EF-2), to form an intermediate called diphthine methyl ester. The four successive methylation reactions represent the second step of diphthamide biosynthesis. In Eremothecium gossypii (strain ATCC 10895 / CBS 109.51 / FGSC 9923 / NRRL Y-1056) (Yeast), this protein is Diphthine methyl ester synthase (DPH5).